The primary structure comprises 548 residues: Glucose-6-phosphate isomerase (548 aa).

Residue Glu-354 is the Proton donor of the active site. Catalysis depends on residues His-385 and Lys-513.

Belongs to the GPI family.

It is found in the cytoplasm. It carries out the reaction alpha-D-glucose 6-phosphate = beta-D-fructose 6-phosphate. It functions in the pathway carbohydrate biosynthesis; gluconeogenesis. The protein operates within carbohydrate degradation; glycolysis; D-glyceraldehyde 3-phosphate and glycerone phosphate from D-glucose: step 2/4. Its function is as follows. Catalyzes the reversible isomerization of glucose-6-phosphate to fructose-6-phosphate. The sequence is that of Glucose-6-phosphate isomerase from Marinomonas sp. (strain MWYL1).